Reading from the N-terminus, the 492-residue chain is GDP-fucose protein O-fucosyltransferase 4 (492 aa).

At 1–7 the chain is on the cytoplasmic side; that stretch reads MAAGPIR. The chain crosses the membrane as a helical; Signal-anchor for type II membrane protein span at residues 8-24; it reads VVLVLLGVLSVCAASGH. The Lumenal segment spans residues 25–492; that stretch reads GSVAEREAGG…HEIFMKRQHL (468 aa). An N-linked (GlcNAc...) asparagine glycan is attached at N166. A disulfide bond links C389 and C392. An N-linked (GlcNAc...) asparagine glycan is attached at N443.

This sequence belongs to the glycosyltransferase 10 family.

The protein localises to the endoplasmic reticulum membrane. It catalyses the reaction L-threonyl-[protein] + GDP-beta-L-fucose = 3-O-(alpha-L-fucosyl)-L-threonyl-[protein] + GDP + H(+). The enzyme catalyses L-seryl-[protein] + GDP-beta-L-fucose = 3-O-(alpha-L-fucosyl)-L-seryl-[protein] + GDP + H(+). Its pathway is protein modification; protein glycosylation. Functionally, protein O-fucosyltransferase that specifically catalyzes O-fucosylation of serine or threonine residues in EMI domains of target proteins, such as MMRN1, MMRN2 and EMID1. Attaches fucose through an O-glycosidic linkage. O-fucosylation of EMI domain-containing proteins may be required for facilitating protein folding and secretion. Also shows minor alpha-(1,3)-fucosyltransferase activity toward activity toward biantennary N-glycan acceptors. However, this was tested with a library of synthetic substrates and this activity is unsure in vivo. The sequence is that of GDP-fucose protein O-fucosyltransferase 4 from Homo sapiens (Human).